The chain runs to 367 residues: Methylthioribose-1-phosphate isomerase (367 aa).

Residues 54 to 56, Arg91, and Gln201 contribute to the substrate site; that span reads RGA. Asp242 (proton donor) is an active-site residue. 252 to 253 provides a ligand contact to substrate; sequence NK.

The protein belongs to the eIF-2B alpha/beta/delta subunits family. MtnA subfamily.

It catalyses the reaction 5-(methylsulfanyl)-alpha-D-ribose 1-phosphate = 5-(methylsulfanyl)-D-ribulose 1-phosphate. It participates in amino-acid biosynthesis; L-methionine biosynthesis via salvage pathway; L-methionine from S-methyl-5-thio-alpha-D-ribose 1-phosphate: step 1/6. In terms of biological role, catalyzes the interconversion of methylthioribose-1-phosphate (MTR-1-P) into methylthioribulose-1-phosphate (MTRu-1-P). The sequence is that of Methylthioribose-1-phosphate isomerase from Acidiphilium cryptum (strain JF-5).